A 320-amino-acid polypeptide reads, in one-letter code: uncharacterized protein (320 aa).

The residue at position 61 (Arg61) is an Omega-N-methylarginine. Residues 299–320 (LHLQHQKQTSKDAGRQTPERKA) are disordered. The span at 307 to 320 (TSKDAGRQTPERKA) shows a compositional bias: basic and acidic residues. The residue at position 315 (Thr315) is a Phosphothreonine.

This is an uncharacterized protein from Mus musculus (Mouse).